We begin with the raw amino-acid sequence, 119 residues long: uncharacterized protein (119 aa).

Residues 30–50 (LMTLPCVLFLSSFGQAVIVVL) form a helical membrane-spanning segment.

The protein localises to the membrane. This is an uncharacterized protein from Saccharomyces cerevisiae (strain ATCC 204508 / S288c) (Baker's yeast).